Consider the following 206-residue polypeptide: Macrophage immunometabolism regulator (206 aa).

Residue Met-1 is modified to N-acetylmethionine. The tract at residues 1–41 (MEVDINGESRSTLTTLPFPGAEANSPGKAEAEKPRCSSTPC) is disordered. Phosphoserine occurs at positions 25, 140, and 167.

It belongs to the UNC119-binding protein family. As to quaternary structure, interacts with UNC119 and UNC119B; interaction preferentially takes place when UNC119 and UNC119B are unliganded with myristoylated proteins.

The protein resides in the cytoplasm. It localises to the cell projection. Its subcellular location is the cilium. Its function is as follows. Regulates the macrophage function, by enhancing the resolution of inflammation and wound repair functions mediated by M2 macrophages. The regulation of macrophage function is, due at least in part, to its ability to inhibit glycolysis. May also play a role in trafficking of proteins via its interaction with UNC119 and UNC119B cargo adapters: may help the release of UNC119 and UNC119B cargo or the recycling of UNC119 and UNC119B. May play a role in ciliary membrane localization via its interaction with UNC119B and protein transport into photoreceptor cells. The protein is Macrophage immunometabolism regulator (MACIR) of Pongo abelii (Sumatran orangutan).